A 196-amino-acid polypeptide reads, in one-letter code: Sulfur-rich protein (196 aa).

3 helical membrane passes run 34–54, 76–96, and 105–125; these read VTAGLQAITSSPGMVNLLIGW, ITLLVLGILLVVAGLACMFIF, and FWLIIPAAIGLIKLLVTSLCF.

The protein localises to the membrane. This chain is Sulfur-rich protein (srp), found in Chlamydia pneumoniae (Chlamydophila pneumoniae).